The primary structure comprises 132 residues: Small ribosomal subunit protein uS8 (132 aa).

The protein belongs to the universal ribosomal protein uS8 family. Part of the 30S ribosomal subunit. Contacts proteins S5 and S12.

One of the primary rRNA binding proteins, it binds directly to 16S rRNA central domain where it helps coordinate assembly of the platform of the 30S subunit. The protein is Small ribosomal subunit protein uS8 of Bartonella tribocorum (strain CIP 105476 / IBS 506).